The primary structure comprises 490 residues: Cysteine desulfurase, mitochondrial (490 aa).

Pyridoxal 5'-phosphate contacts are provided by residues 161–162 (AT), asparagine 241, glutamine 269, and 289–291 (SSH). Residue lysine 292 is modified to N6-(pyridoxal phosphate)lysine. Threonine 329 is a binding site for pyridoxal 5'-phosphate. The active-site Cysteine persulfide intermediate is cysteine 414. Cysteine 414 contacts [2Fe-2S] cluster.

Belongs to the class-V pyridoxal-phosphate-dependent aminotransferase family. NifS/IscS subfamily. Pyridoxal 5'-phosphate is required as a cofactor.

It is found in the mitochondrion. It carries out the reaction (sulfur carrier)-H + L-cysteine = (sulfur carrier)-SH + L-alanine. Functionally, catalyzes the removal of elemental sulfur from cysteine to produce alanine. It supplies the inorganic sulfur for iron-sulfur (Fe-S) clusters. Plays a role in both tRNA-processing and mitochondrial metabolism. Involved in the 2-thio-modification of both 5-carboxymethylaminomethyl-2-thiouridine in mitochondrial tRNAs and 5-methoxycarbonylmethyl-2-thiouridine (mcm5s2U) in cytoplasmic tRNAs. This is Cysteine desulfurase, mitochondrial from Eremothecium gossypii (strain ATCC 10895 / CBS 109.51 / FGSC 9923 / NRRL Y-1056) (Yeast).